The following is a 1583-amino-acid chain: Dynamin-binding protein (1583 aa).

Methionine 1 is modified (N-acetylmethionine). SH3 domains lie at 2–61, 66–126, 145–204, and 243–302; these read EAGS…IVTI, EGER…ELCL, YSMG…LLGP, and QPGT…LFSK. Disordered stretches follow at residues 217–244, 306–329, and 366–464; these read HNDC…EEQP, EETM…DCRE, and ECEV…RGMY. A compositionally biased stretch (acidic residues) spans 224–243; sequence GEEETPTGEEERGPEEDEEQ. A compositionally biased stretch (basic and acidic residues) spans 366–379; the sequence is ECEVHKSSHQDEGT. Over residues 406 to 442 the composition is skewed to polar residues; that stretch reads ETINGVSSQSQVPFRPRWQQNQYYSTTGRGHLSTEQY. At serine 495 the chain carries Phosphoserine. Disordered regions lie at residues 594-656 and 671-693; these read RGSS…PSAQ and LFTH…QTLD. A compositionally biased stretch (pro residues) spans 637 to 653; the sequence is PEPPLAMRPSRPAPLPP. Positions 675-685 are enriched in basic and acidic residues; it reads ESCESPEKEGP. The stretch at 742–762 forms a coiled coil; that stretch reads LEFYESNIESLNMELQQLREM. Residues 791–974 enclose the DH domain; it reads KRAKVIEELL…KEINVNINEY (184 aa). The BAR domain occupies 1015–1224; sequence LKHLTGFAPQ…LKVAGREGNL (210 aa). The 64-residue stretch at 1292–1355 folds into the SH3 5 domain; sequence PPEKLFQAER…YSSFLKPYNT (64 aa). Residues 1357–1496 form a disordered region; it reads RSHSDVSVGS…GRNGQGKDLT (140 aa). Over residues 1361 to 1387 the composition is skewed to low complexity; sequence DVSVGSHSSTESEQSSSSPRFPRQNSS. The segment covering 1388–1414 has biased composition (polar residues); the sequence is GTLTFNPGSMAVSFTSGSCQKQPQDAT. Positions 1433–1456 are enriched in low complexity; the sequence is SESSPSRCPSDPDSSPQPRSWDSP. One can recognise an SH3 6 domain in the interval 1519–1582; sequence EGNQVYFAVY…PSNYIRKAEY (64 aa).

As to quaternary structure, binds DNM1 via its N-terminal SH3 domains. The C-terminal SH3 domain binds a complex containing actin, tubulin, Hsp70 and actin-regulatory proteins, such as ENAH, EVL, WIRE, CR16, WAVE1 and NAP1L1. Interacts with FASLG. Interacts (via SH3 domain 6) with WASL. Interacts (via SH3 domain 6) interacts with ENAH. Interacts (via C-terminal domain) with TJP1; required for the apical cell-cell junction localization of DNMBP.

The protein localises to the cytoplasm. The protein resides in the golgi apparatus. It is found in the golgi stack. It localises to the cytoskeleton. Its subcellular location is the synapse. The protein localises to the cell junction. Functionally, plays a critical role as a guanine nucleotide exchange factor (GEF) for CDC42 in several intracellular processes associated with the actin and microtubule cytoskeleton. Regulates the structure of apical junctions in epithelial cells. Participates in the normal lumenogenesis of epithelial cell cysts by regulating spindle orientation. Plays a key role in ciliogenesis and cyst formation. May play a role in membrane trafficking between the cell surface and the Golgi. The polypeptide is Dynamin-binding protein (Canis lupus familiaris (Dog)).